The primary structure comprises 294 residues: NAD kinase (294 aa).

Asp74 (proton acceptor) is an active-site residue. NAD(+)-binding positions include 74–75, 148–149, His159, Arg176, Asp178, 189–194, and Gln249; these read DG, NE, and TAYSLS.

It belongs to the NAD kinase family. A divalent metal cation serves as cofactor.

The protein resides in the cytoplasm. The catalysed reaction is NAD(+) + ATP = ADP + NADP(+) + H(+). In terms of biological role, involved in the regulation of the intracellular balance of NAD and NADP, and is a key enzyme in the biosynthesis of NADP. Catalyzes specifically the phosphorylation on 2'-hydroxyl of the adenosine moiety of NAD to yield NADP. This Vibrio cholerae serotype O1 (strain ATCC 39541 / Classical Ogawa 395 / O395) protein is NAD kinase.